The sequence spans 912 residues: Protein translocase subunit SecA (912 aa).

Residues Q87, 105-109, and D512 each bind ATP; that span reads GEGKT. Residues C896, C898, C907, and H908 each contribute to the Zn(2+) site.

It belongs to the SecA family. As to quaternary structure, monomer and homodimer. Part of the essential Sec protein translocation apparatus which comprises SecA, SecYEG and auxiliary proteins SecDF-YajC and YidC. Zn(2+) serves as cofactor.

The protein resides in the cell inner membrane. It is found in the cytoplasm. It catalyses the reaction ATP + H2O + cellular proteinSide 1 = ADP + phosphate + cellular proteinSide 2.. Functionally, part of the Sec protein translocase complex. Interacts with the SecYEG preprotein conducting channel. Has a central role in coupling the hydrolysis of ATP to the transfer of proteins into and across the cell membrane, serving both as a receptor for the preprotein-SecB complex and as an ATP-driven molecular motor driving the stepwise translocation of polypeptide chains across the membrane. This chain is Protein translocase subunit SecA, found in Pseudomonas fluorescens (strain Pf0-1).